Reading from the N-terminus, the 272-residue chain is Thymidine phosphorylase (272 aa).

Belongs to the thymidine/pyrimidine-nucleoside phosphorylase family. In terms of assembly, homodimer.

It catalyses the reaction thymidine + phosphate = 2-deoxy-alpha-D-ribose 1-phosphate + thymine. Its function is as follows. The enzymes which catalyze the reversible phosphorolysis of pyrimidine nucleosides are involved in the degradation of these compounds and in their utilization as carbon and energy sources, or in the rescue of pyrimidine bases for nucleotide synthesis. The chain is Thymidine phosphorylase (deoA) from Metamycoplasma hominis (Mycoplasma hominis).